We begin with the raw amino-acid sequence, 330 residues long: B3 domain-containing protein REM21 (330 aa).

Residues 23–116 (PRFFTVFLSH…SYEVSIYGRG (94 aa)) constitute a DNA-binding region (TF-B3). Residues 129–138 (EISDDTEDDN) are compositionally biased toward acidic residues. The disordered stretch occupies residues 129 to 169 (EISDDTEDDNVSLHSPSNVSLDSLSNDSHHSTSNVSLRSLS). The span at 142–162 (HSPSNVSLDSLSNDSHHSTSN) shows a compositional bias: low complexity.

The protein localises to the nucleus. This chain is B3 domain-containing protein REM21 (REM21), found in Arabidopsis thaliana (Mouse-ear cress).